A 130-amino-acid polypeptide reads, in one-letter code: Small ribosomal subunit protein bS6 (130 aa).

Residues Ala-99 to Glu-130 are disordered. The span at Lys-104–Ala-116 shows a compositional bias: basic and acidic residues. Positions Ala-119–Glu-130 are enriched in acidic residues.

Belongs to the bacterial ribosomal protein bS6 family.

Functionally, binds together with bS18 to 16S ribosomal RNA. This Yersinia enterocolitica serotype O:8 / biotype 1B (strain NCTC 13174 / 8081) protein is Small ribosomal subunit protein bS6.